The primary structure comprises 89 residues: Small ribosomal subunit protein uS15 (89 aa).

Residues 1–10 (MAVTTDQKSQ) are compositionally biased toward polar residues. A disordered region spans residues 1 to 22 (MAVTTDQKSQVMRDYQRAAGDT).

Belongs to the universal ribosomal protein uS15 family. Part of the 30S ribosomal subunit. Forms a bridge to the 50S subunit in the 70S ribosome, contacting the 23S rRNA.

One of the primary rRNA binding proteins, it binds directly to 16S rRNA where it helps nucleate assembly of the platform of the 30S subunit by binding and bridging several RNA helices of the 16S rRNA. Functionally, forms an intersubunit bridge (bridge B4) with the 23S rRNA of the 50S subunit in the ribosome. This chain is Small ribosomal subunit protein uS15, found in Nitrosomonas europaea (strain ATCC 19718 / CIP 103999 / KCTC 2705 / NBRC 14298).